The primary structure comprises 442 residues: Trigger factor (442 aa).

The PPIase FKBP-type domain occupies 165–250 (DDTAQIDFEG…LHKILQKELP (86 aa)).

This sequence belongs to the FKBP-type PPIase family. Tig subfamily.

It is found in the cytoplasm. It carries out the reaction [protein]-peptidylproline (omega=180) = [protein]-peptidylproline (omega=0). Functionally, involved in protein export. Acts as a chaperone by maintaining the newly synthesized protein in an open conformation. Functions as a peptidyl-prolyl cis-trans isomerase. The sequence is that of Trigger factor from Helicobacter hepaticus (strain ATCC 51449 / 3B1).